The following is a 102-amino-acid chain: Small ribosomal subunit protein uS10 (102 aa).

It belongs to the universal ribosomal protein uS10 family. As to quaternary structure, part of the 30S ribosomal subunit.

Functionally, involved in the binding of tRNA to the ribosomes. The sequence is that of Small ribosomal subunit protein uS10 from Thermobifida fusca (strain YX).